The sequence spans 411 residues: tRNA (uracil(54)-C(5))-methyltransferase (411 aa).

Residues C62, C68, C71, and C138 each coordinate [4Fe-4S] cluster. S-adenosyl-L-methionine contacts are provided by residues Q254, Y280, T285, 301-302 (DS), D328, and D342. The Nucleophile role is filled by C369. The active-site Proton acceptor is E402.

It belongs to the class I-like SAM-binding methyltransferase superfamily. RNA M5U methyltransferase family.

The enzyme catalyses uridine(54) in tRNA + S-adenosyl-L-methionine = 5-methyluridine(54) in tRNA + S-adenosyl-L-homocysteine + H(+). In terms of biological role, catalyzes the formation of 5-methyl-uridine at position 54 (m5U54) in tRNA. This Pyrococcus furiosus (strain ATCC 43587 / DSM 3638 / JCM 8422 / Vc1) protein is tRNA (uracil(54)-C(5))-methyltransferase.